The chain runs to 368 residues: MAAKSFASRLRDSRRFLNGFLAGAVVGAAGAGLTALQFFRRPDAESAKLARQPHESAEEAVLEQFGFPLAGTETRRYTNHALSYDQAKRVPRWVLEHISKDKIIGDADRKHCKFKPDPSVPSAFSALNEDYIGSGWSRGHMAPAGNNKFSSEAMAETFYLSNIVPQNFDNNSGYWNRIEMYCRELTERFEDVWIVSGPLTLPHTRNDGTKTVSYQVIGEDNVAVPSHLYKVILARRSPESTEPLALGAFVVPNKAIGFQSQLSEFQVSLHDLEKMSGLVFFPRLDRSRDIRNICSVDTCKLLGFQEFTLYLSTRKIDGARSVARLEKVLEALKSSGVEPDDYFLSRYEKKLEELKAKEQKDAQLEKQS.

The N-terminal 41 residues, 1 to 41 (MAAKSFASRLRDSRRFLNGFLAGAVVGAAGAGLTALQFFRR), are a transit peptide targeting the mitochondrion. The Proton acceptor role is filled by H140. An a divalent metal cation-binding site is contributed by N171.

The protein belongs to the DNA/RNA non-specific endonuclease family. As to quaternary structure, homodimer. A divalent metal cation serves as cofactor.

The protein localises to the mitochondrion inner membrane. In terms of biological role, endo/exonuclease with nicking activity towards supercoiled DNA, a preference for single-stranded DNA and 5'-3' exonuclease activity. In Mus musculus (Mouse), this protein is Nuclease EXOG, mitochondrial (Exog).